An 84-amino-acid polypeptide reads, in one-letter code: Small ribosomal subunit protein uS17 (84 aa).

This sequence belongs to the universal ribosomal protein uS17 family. As to quaternary structure, part of the 30S ribosomal subunit.

One of the primary rRNA binding proteins, it binds specifically to the 5'-end of 16S ribosomal RNA. The polypeptide is Small ribosomal subunit protein uS17 (Aliivibrio salmonicida (strain LFI1238) (Vibrio salmonicida (strain LFI1238))).